The following is a 601-amino-acid chain: Serine/threonine-protein phosphatase 2A 65 kDa regulatory subunit A beta isoform (601 aa).

The residue at position 2 (Ala-2) is an N-acetylalanine. HEAT repeat units follow at residues 20–58, 59–96, 97–135, 136–173, 174–212, 213–251, 252–290, 291–333, 334–372, 373–411, 412–450, 451–489, 490–528, 529–567, and 568–601; these read DSLY…GVER, TRTE…GGPD, FAHC…TPVA, LEAH…ASNA, VKAE…ELDS, VKTE…SQED, LEAL…GPKI, ALSD…RETV, IMNQ…GKEN, TIEH…GIRQ, LSQS…GVEF, FDEK…GTEW, AQNT…GKEI, TTKQ…DTNA, and LQGE…LALA.

This sequence belongs to the phosphatase 2A regulatory subunit A family. In terms of assembly, PP2A consists of a common heterodimeric core enzyme, composed of a 36 kDa catalytic subunit (subunit C) and a 65 kDa constant regulatory subunit (PR65 or subunit A), that associates with a variety of regulatory subunits. Proteins that associate with the core dimer include three families of regulatory subunits B (the R2/B/PR55/B55, R3/B''/PR72/PR130/PR59 and R5/B'/B56 families), the 48 kDa variable regulatory subunit, viral proteins, and cell signaling molecules. Interacts with IPO9. Interacts with SGO1. Interacts with RAF1.

The PR65 subunit of protein phosphatase 2A serves as a scaffolding molecule to coordinate the assembly of the catalytic subunit and a variable regulatory B subunit. The sequence is that of Serine/threonine-protein phosphatase 2A 65 kDa regulatory subunit A beta isoform (Ppp2r1b) from Mus musculus (Mouse).